A 76-amino-acid polypeptide reads, in one-letter code: DNA gyrase inhibitor YacG (76 aa).

Positions 7, 10, 26, and 30 each coordinate Zn(2+).

This sequence belongs to the DNA gyrase inhibitor YacG family. Interacts with GyrB. Requires Zn(2+) as cofactor.

Functionally, inhibits all the catalytic activities of DNA gyrase by preventing its interaction with DNA. Acts by binding directly to the C-terminal domain of GyrB, which probably disrupts DNA binding by the gyrase. The polypeptide is DNA gyrase inhibitor YacG (Pseudoalteromonas translucida (strain TAC 125)).